Here is a 395-residue protein sequence, read N- to C-terminus: Type II restriction enzyme BsuFI (395 aa).

As to quaternary structure, homodimer. Mg(2+) is required as a cofactor.

It carries out the reaction Endonucleolytic cleavage of DNA to give specific double-stranded fragments with terminal 5'-phosphates.. Its function is as follows. A P subtype restriction enzyme that recognizes the double-stranded sequence 5'-CCGG-3' and cleaves after C-1. The sequence is that of Type II restriction enzyme BsuFI (hsdFR) from Bacillus subtilis.